The primary structure comprises 150 residues: UPF0178 protein Shewana3_1627 (150 aa).

The protein belongs to the UPF0178 family.

This Shewanella sp. (strain ANA-3) protein is UPF0178 protein Shewana3_1627.